Here is a 664-residue protein sequence, read N- to C-terminus: Two-component response regulator ARR2 (664 aa).

Residues 1–21 (MVNPGHGRGPDSGTAAGGSNS) are disordered. One can recognise a Response regulatory domain in the interval 29 to 144 (RVLVVDDDPT…ALKNIWQHVV (116 aa)). Residue D80 is modified to 4-aspartylphosphate. Positions 151–215 (WNVSEHSGGS…DDKEDSSSLK (65 aa)) are disordered. Positions 165–178 (GGDRDRQQQHREDA) are enriched in basic and acidic residues. Over residues 180–191 (NNSSSVNEGNGR) the composition is skewed to polar residues. Residues 200–209 (EVDDQGDDKE) are compositionally biased toward acidic residues. The Nuclear localization signal signature appears at 215 to 218 (KKPR). Residues 218–268 (RVVWSVELHQQFVAAVNQLGVDKAVPKKILEMMNVPGLTRENVASHLQKYR) constitute a DNA-binding region (myb-like GARP). Positions 554-567 (AAFSTSEAYSSSST) are enriched in low complexity. The tract at residues 554-589 (AAFSTSEAYSSSSTQRKRRETDATVVGEHGQNLQSP) is disordered.

Belongs to the ARR family. Type-B subfamily. In terms of assembly, binds the target DNA as a monomer. Interacts with histidine-containing phosphotransfer proteins. Two-component system major event consists of a His-to-Asp phosphorelay between a sensor histidine kinase (HK) and a response regulator (RR). In plants, the His-to-Asp phosphorelay involves an additional intermediate named Histidine-containing phosphotransfer protein (HPt). This multistep phosphorelay consists of a His-Asp-His-Asp sequential transfer of a phosphate group between first a His and an Asp of the HK protein, followed by the transfer to a conserved His of the HPt protein and finally the transfer to an Asp in the receiver domain of the RR protein. Phosphorylated in response to cytokinin mediated by AHK3. Detected in the whole plant. Predominantly expressed in pollen.

It is found in the nucleus. Functionally, transcriptional activator that binds specifically to the DNA sequence 5'-[AG]GATT-3'. Functions as a response regulator involved in His-to-Asp phosphorelay signal transduction system. Phosphorylation of the Asp residue in the receiver domain activates the ability of the protein to promote the transcription of target genes. Could directly activate some type-A response regulators in response to cytokinins. Involved in the expression of nuclear genes for components of mitochondrial complex I. Promotes cytokinin-mediated leaf longevity. Involved in the ethylene signaling pathway in an ETR1-dependent manner and in the cytokinin signaling pathway. The polypeptide is Two-component response regulator ARR2 (ARR2) (Arabidopsis thaliana (Mouse-ear cress)).